The sequence spans 294 residues: UDP-N-acetylenolpyruvoylglucosamine reductase (294 aa).

The FAD-binding PCMH-type domain occupies 26 to 189 (VGGQADVLFK…IEAEFKGVSS (164 aa)). Arginine 169 is a catalytic residue. Cysteine 218 acts as the Proton donor in catalysis. Glutamate 288 is an active-site residue.

The protein belongs to the MurB family. Requires FAD as cofactor.

It is found in the cytoplasm. It carries out the reaction UDP-N-acetyl-alpha-D-muramate + NADP(+) = UDP-N-acetyl-3-O-(1-carboxyvinyl)-alpha-D-glucosamine + NADPH + H(+). It participates in cell wall biogenesis; peptidoglycan biosynthesis. Its function is as follows. Cell wall formation. This chain is UDP-N-acetylenolpyruvoylglucosamine reductase, found in Wolbachia pipientis subsp. Culex pipiens (strain wPip).